The chain runs to 276 residues: uncharacterized protein (276 aa).

A propeptide spans 1-4 (MNRG) (leader sequence). Methionine 5 is modified (N-methylmethionine). A helical membrane pass occupies residues 5–26 (MTLIELLVALALSIILSLGLYY).

The protein localises to the membrane. This is an uncharacterized protein from Aquifex aeolicus (strain VF5).